The chain runs to 439 residues: Glutamate-1-semialdehyde 2,1-aminomutase (439 aa).

N6-(pyridoxal phosphate)lysine is present on K273.

This sequence belongs to the class-III pyridoxal-phosphate-dependent aminotransferase family. HemL subfamily. As to quaternary structure, homodimer. Pyridoxal 5'-phosphate serves as cofactor.

It localises to the cytoplasm. The enzyme catalyses (S)-4-amino-5-oxopentanoate = 5-aminolevulinate. It participates in porphyrin-containing compound metabolism; protoporphyrin-IX biosynthesis; 5-aminolevulinate from L-glutamyl-tRNA(Glu): step 2/2. This chain is Glutamate-1-semialdehyde 2,1-aminomutase, found in Paenarthrobacter aurescens (strain TC1).